We begin with the raw amino-acid sequence, 362 residues long: MANIEKTEFHVPAPVSAAGNQKSSLGNADVDARLQSNEGEVETSLRPRSLDEFIGQPKVRDQLNLVLSGAKSRGVAPDHVLLSGPPGLGKTTMAMIIAYELGTSLRMTSGPALERAGDLAAMLSNLMEGDVLFIDEIHRMARPAEEMLYMAMEDFRIDVIVGKGPGATSIPLELAPFTLVGATTRSGMLTGPLRDRFGFTAQMEFYEVEDLTKVVVRAAAVLGVSIDHDAAVEIASRSRGTPRIANRLLRRVRDFAEVNADGHINLAAAQAALVVFDVDEMGLDRLDRAVLEALIKGHGGGPVGINTLALAVGEEPSTVEEVCEPYLVRAGMVTRTGRGRVATATAWRHLGLEPPEGIIGSL.

The segment at 1–27 (MANIEKTEFHVPAPVSAAGNQKSSLGN) is disordered. Residues 13 to 206 (APVSAAGNQK…FGFTAQMEFY (194 aa)) form a large ATPase domain (RuvB-L) region. ATP-binding positions include L45, R46, G87, K90, T91, T92, 153–155 (EDF), R196, Y206, and R243. T91 serves as a coordination point for Mg(2+). Residues 207–277 (EVEDLTKVVV…AAQAALVVFD (71 aa)) form a small ATPAse domain (RuvB-S) region. The interval 280-362 (EMGLDRLDRA…EPPEGIIGSL (83 aa)) is head domain (RuvB-H). DNA-binding residues include R335 and R340.

It belongs to the RuvB family. Homohexamer. Forms an RuvA(8)-RuvB(12)-Holliday junction (HJ) complex. HJ DNA is sandwiched between 2 RuvA tetramers; dsDNA enters through RuvA and exits via RuvB. An RuvB hexamer assembles on each DNA strand where it exits the tetramer. Each RuvB hexamer is contacted by two RuvA subunits (via domain III) on 2 adjacent RuvB subunits; this complex drives branch migration. In the full resolvosome a probable DNA-RuvA(4)-RuvB(12)-RuvC(2) complex forms which resolves the HJ.

It is found in the cytoplasm. The catalysed reaction is ATP + H2O = ADP + phosphate + H(+). The RuvA-RuvB-RuvC complex processes Holliday junction (HJ) DNA during genetic recombination and DNA repair, while the RuvA-RuvB complex plays an important role in the rescue of blocked DNA replication forks via replication fork reversal (RFR). RuvA specifically binds to HJ cruciform DNA, conferring on it an open structure. The RuvB hexamer acts as an ATP-dependent pump, pulling dsDNA into and through the RuvAB complex. RuvB forms 2 homohexamers on either side of HJ DNA bound by 1 or 2 RuvA tetramers; 4 subunits per hexamer contact DNA at a time. Coordinated motions by a converter formed by DNA-disengaged RuvB subunits stimulates ATP hydrolysis and nucleotide exchange. Immobilization of the converter enables RuvB to convert the ATP-contained energy into a lever motion, pulling 2 nucleotides of DNA out of the RuvA tetramer per ATP hydrolyzed, thus driving DNA branch migration. The RuvB motors rotate together with the DNA substrate, which together with the progressing nucleotide cycle form the mechanistic basis for DNA recombination by continuous HJ branch migration. Branch migration allows RuvC to scan DNA until it finds its consensus sequence, where it cleaves and resolves cruciform DNA. In Corynebacterium diphtheriae (strain ATCC 700971 / NCTC 13129 / Biotype gravis), this protein is Holliday junction branch migration complex subunit RuvB.